Consider the following 2094-residue polypeptide: Non-reducing polyketide synthase ustP (2094 aa).

An N-terminal acylcarrier protein transacylase (SAT) domain region spans residues 9 to 243 (VFGDLSVPYH…GKIQVGGLFH (235 aa)). The tract at residues 357 to 377 (NTAGVDSSSRGSGHADAEKQP) is disordered. The region spanning 379–813 (RSKIAIIGFS…GGNSSVLVED (435 aa)) is the Ketosynthase family 3 (KS3) domain. Active-site for beta-ketoacyl synthase activity residues include cysteine 551, histidine 686, and histidine 727. The interval 914 to 1227 (FSFTGQGSQY…EDDCKIFTPA (314 aa)) is malonyl-CoA:ACP transacylase (MAT) domain. The For acyl/malonyl transferase activity role is filled by serine 1004. The interval 1305–1629 (TTSVQYITAE…QRKVLDLVLP (325 aa)) is product template (PT) domain. Residues 1308-1445 (VQYITAESYG…CSGFFTDKSR (138 aa)) are N-terminal hotdog fold. The region spanning 1308–1625 (VQYITAESYG…FAAVQRKVLD (318 aa)) is the PKS/mFAS DH domain. Histidine 1341 serves as the catalytic Proton acceptor; for dehydratase activity. The tract at residues 1473 to 1625 (GSVHMIKTGM…FAAVQRKVLD (153 aa)) is C-terminal hotdog fold. Aspartate 1536 serves as the catalytic Proton donor; for dehydratase activity. Residues 1644–1671 (AAAAPSQRQQQQQQQQQQQPAQPVAASQ) show a composition bias toward low complexity. Positions 1644–1689 (AAAAPSQRQQQQQQQQQQQPAQPVAASQESGMDDMPPTLVPSEKKD) are disordered. A Carrier domain is found at 1689–1763 (DVPSEKLKVI…ELVRHILGSS (75 aa)). Serine 1723 is modified (O-(pantetheine 4'-phosphoryl)serine). Polar residues predominate over residues 1762 to 1778 (SSTPSSDSGPATPSITP). Residues 1762–1782 (SSTPSSDSGPATPSITPLQEP) form a disordered region. Positions 1844-2069 (KVWLFPDGSG…GVVEGAHHFS (226 aa)) are claisen cyclase domain. The active-site For Claisen cyclase activity is serine 1916.

It catalyses the reaction 6 malonyl-CoA + acetyl-CoA + 6 H(+) = naphtopyrone YWA1 + 6 CO2 + 7 CoA + H2O. Its pathway is secondary metabolite biosynthesis. Non-reducing polyketide synthase; part of the gene cluster that mediates the biosynthesis of ustilaginoidins, dimeric gamma-naphthopyrones isolated from different fungal species. The first step in the biosynthesis of ustilaginoidins is the production of gamma-naphthopyrone precursor YWA1 by the non-reducing polyketide synthase ustP, via condensation of one acetyl-CoA starter unit with 6 malonyl-CoA units. YWA1 is then probably substrate of the ustZ to yield norrubrofusarin via a dehydration reaction. A key enzyme in the biosynthetic pathway is the laccase ustL, which catalyzes the oxidative dimerization of norrubrofusarin to ustilaginoidin A. It can produce the M- and P-atropisomers in varying amounts, depending on the reaction conditions. For the biosynthesis of 3-methylustilaginoid in derivatives such as chaetochromin A, a methylated derivative of YWA1 is required. The C-methylation is considered to be catalyzed by ustM, the phosphopantetheine attachment site of which indicates that it acts on the growing polyketide chain before release of the product. For the biosynthesis of chaetochromin A, it is assumed that saturation of the D2 double bond takes place before dimerization, and is probably catalyzed by an external reductase because no candidate gene was identified within the cluster. The sequence is that of Non-reducing polyketide synthase ustP from Ustilaginoidea virens (Rice false smut fungus).